The primary structure comprises 340 residues: Ribosomal RNA large subunit methyltransferase F (340 aa).

Positions Met1–Arg36 are disordered.

This sequence belongs to the methyltransferase superfamily. METTL16/RlmF family.

The protein resides in the cytoplasm. The enzyme catalyses adenosine(1618) in 23S rRNA + S-adenosyl-L-methionine = N(6)-methyladenosine(1618) in 23S rRNA + S-adenosyl-L-homocysteine + H(+). Specifically methylates the adenine in position 1618 of 23S rRNA. The sequence is that of Ribosomal RNA large subunit methyltransferase F from Pseudomonas fluorescens (strain Pf0-1).